Consider the following 218-residue polypeptide: Transcription initiation factor TFIID subunit 10 (218 aa).

Composition is skewed to low complexity over residues 1 to 21 (MSCS…ASAP) and 29 to 39 (APAALPSSTAA). The interval 1–85 (MSCSGSGADP…GAAPVSAGGA (85 aa)) is disordered. An N-acetylserine modification is found at S2. The residue at position 44 (S44) is a Phosphoserine. A Phosphothreonine modification is found at T48. Positions 48–62 (TAGGPGAGAAAGGTG) are enriched in gly residues. The short motif at 187–189 (KSK) is the [KR]-[STA]-K motif element. An Allysine; alternate modification is found at K189. K189 carries the post-translational modification N6,N6,N6-trimethyllysine; alternate.

Belongs to the TAF10 family. Component of the TFIID basal transcription factor complex, composed of TATA-box-binding protein TBP, and a number of TBP-associated factors (TAFs), including TAF1, TAF2, TAF3, TAF4, TAF5, TAF6, TAF7, TAF8, TAF9, TAF10, TAF11, TAF12 and TAF13. Component of the TATA-binding protein-free TAF complex (TFTC), the PCAF histone acetylase complex and the STAGA transcription coactivator-HAT complex. The PCAF complex consists at least of TADA2L/ADA2, TADA3L/ADA3, SUPT3H, TAF5L TAF6L, TAF9, TAF10, TAF12 and TRRAP. The TFTC-HAT complex consists at least of TAF5L, TAF6L, TADA3L, SUPT3H, TAF2, TAF4, TAF5, GCN5L2/GCN5, TAF10 and TRRAP. The STAGA transcription coactivator-HAT complex consists at least of SUPT3H, GCN5L2, TAF5L, TAF6L, SUPT7L, TADA3L, TAD1L, TAF10, TAF12, TRRAP and TAF9. The STAGA core complex is associated with a subcomplex required for histone deubiquitination composed of ATXN7L3, ENY2 and USP22. Interacts with TAF3. Interacts with LOXL2. Interacts with TAF12 isoform TAFII20; the interaction is direct. Post-translationally, monomethylated at Lys-189 by SETD7, leading to increased affinity for RNA polymerase II. In terms of processing, lysine deamination at Lys-189 to form allysine is mediated by LOXL2. Allysine formation by LOXL2 results in release of TAF10 from promoters, leading to inhibition of TFIID-dependent transcription.

The protein localises to the nucleus. Its function is as follows. The TFIID basal transcription factor complex plays a major role in the initiation of RNA polymerase II (Pol II)-dependent transcription. TFIID recognizes and binds promoters with or without a TATA box via its subunit TBP, a TATA-box-binding protein, and promotes assembly of the pre-initiation complex (PIC). The TFIID complex consists of TBP and TBP-associated factors (TAFs), including TAF1, TAF2, TAF3, TAF4, TAF5, TAF6, TAF7, TAF8, TAF9, TAF10, TAF11, TAF12 and TAF13. TAF10 is also component of the PCAF histone acetylase complex, the TATA-binding protein-free TAF complex (TFTC) and the STAGA transcription coactivator-HAT complex. May regulate cyclin E expression. The chain is Transcription initiation factor TFIID subunit 10 (TAF10) from Homo sapiens (Human).